We begin with the raw amino-acid sequence, 174 residues long: Regenerating islet-derived protein 3-alpha (174 aa).

Residues 1–25 (MLPRLSFNNVSWTLLYYLFIFQVRG) form the signal peptide. A propeptide spanning residues 26–36 (EDSQKAVPSTR) is cleaved from the precursor. Cystine bridges form between Cys39/Cys50, Cys67/Cys170, and Cys145/Cys162. A C-type lectin domain is found at 46 to 171 (YRSYCYTLVT…CDVELPFVCK (126 aa)). The sufficient to activate EXTL3 stretch occupies residues 102-117 (WIWLHDPTMGQQPNGG). Zn(2+) contacts are provided by His106 and Glu120.

In terms of assembly, forms a hexameric membrane-permeabilizing oligomeric pore on membrane phospholipids. The hexamer is formed by three dimers related by helical symmetry. Forms filaments, filamentation traps pore complexes and limits damage to host cells. Interacts with EXTL3. Post-translationally, proteolytic processing by trypsin removes an inhibitory N-terminal propeptide and is essential for peptidoglycan binding and antibacterial activity. In terms of tissue distribution, low expression found in healthy pancreas.

Its subcellular location is the secreted. Bactericidal C-type lectin. The lack of the EPN motif may explain its inability to bind peptidoglycan. Its function is as follows. Acts as a hormone in response to different stimuli like anti-inflammatory signals, such as IL17A, or gut microbiome. Secreted by different cell types to activate its receptor EXTL3 and induce cell specific signaling pathways. Induced by IL17A in keratinocytes, regulates keratinocyte proliferation and differentiation after skin injury via activation of EXTL3-PI3K-AKT signaling pathway. In parallel, inhibits skin inflammation through the inhibition of inflammatory cytokines such as IL6 and TNF. In pancreas, is able to permealize beta-cells membrane and stimulate their proliferation. The polypeptide is Regenerating islet-derived protein 3-alpha (Reg3a) (Rattus norvegicus (Rat)).